Reading from the N-terminus, the 232-residue chain is Octanoyltransferase (232 aa).

One can recognise a BPL/LPL catalytic domain in the interval 43-231; the sequence is DQTPNYFLFV…HFTQLFDCTV (189 aa). Substrate is bound by residues 88 to 95, 160 to 162, and 173 to 175; these read RGGDITYH, ALG, and GFA. The Acyl-thioester intermediate role is filled by Cys191.

The protein belongs to the LipB family.

The protein localises to the cytoplasm. It catalyses the reaction octanoyl-[ACP] + L-lysyl-[protein] = N(6)-octanoyl-L-lysyl-[protein] + holo-[ACP] + H(+). The protein operates within protein modification; protein lipoylation via endogenous pathway; protein N(6)-(lipoyl)lysine from octanoyl-[acyl-carrier-protein]: step 1/2. Catalyzes the transfer of endogenously produced octanoic acid from octanoyl-acyl-carrier-protein onto the lipoyl domains of lipoate-dependent enzymes. Lipoyl-ACP can also act as a substrate although octanoyl-ACP is likely to be the physiological substrate. The chain is Octanoyltransferase from Flavobacterium psychrophilum (strain ATCC 49511 / DSM 21280 / CIP 103535 / JIP02/86).